Here is a 472-residue protein sequence, read N- to C-terminus: Adenosylhomocysteinase (472 aa).

The substrate site is built by Thr61, Asp136, and Glu196. An NAD(+)-binding site is contributed by 197-199 (TTT). 2 residues coordinate substrate: Lys226 and Asp230. NAD(+) contacts are provided by residues Asn231, 260-265 (GYGDVG), Glu283, Asn318, 339-341 (IGH), and Asn384.

The protein belongs to the adenosylhomocysteinase family. Requires NAD(+) as cofactor.

It is found in the cytoplasm. The catalysed reaction is S-adenosyl-L-homocysteine + H2O = L-homocysteine + adenosine. The protein operates within amino-acid biosynthesis; L-homocysteine biosynthesis; L-homocysteine from S-adenosyl-L-homocysteine: step 1/1. Its function is as follows. May play a key role in the regulation of the intracellular concentration of adenosylhomocysteine. The polypeptide is Adenosylhomocysteinase (Cupriavidus necator (strain ATCC 17699 / DSM 428 / KCTC 22496 / NCIMB 10442 / H16 / Stanier 337) (Ralstonia eutropha)).